A 618-amino-acid chain; its full sequence is DNA mismatch repair protein MutL (618 aa).

This sequence belongs to the DNA mismatch repair MutL/HexB family.

This protein is involved in the repair of mismatches in DNA. It is required for dam-dependent methyl-directed DNA mismatch repair. May act as a 'molecular matchmaker', a protein that promotes the formation of a stable complex between two or more DNA-binding proteins in an ATP-dependent manner without itself being part of a final effector complex. The polypeptide is DNA mismatch repair protein MutL (Porphyromonas gingivalis (strain ATCC BAA-308 / W83)).